The following is a 100-amino-acid chain: Large ribosomal subunit protein uL23 (100 aa).

Belongs to the universal ribosomal protein uL23 family. In terms of assembly, part of the 50S ribosomal subunit. Contacts protein L29, and trigger factor when it is bound to the ribosome.

Its function is as follows. One of the early assembly proteins it binds 23S rRNA. One of the proteins that surrounds the polypeptide exit tunnel on the outside of the ribosome. Forms the main docking site for trigger factor binding to the ribosome. This Synechococcus sp. (strain CC9902) protein is Large ribosomal subunit protein uL23.